Consider the following 213-residue polypeptide: Thymidylate kinase (213 aa).

10–17 (GLEGAGKT) contributes to the ATP binding site.

Belongs to the thymidylate kinase family.

It carries out the reaction dTMP + ATP = dTDP + ADP. In terms of biological role, phosphorylation of dTMP to form dTDP in both de novo and salvage pathways of dTTP synthesis. The sequence is that of Thymidylate kinase from Escherichia coli O7:K1 (strain IAI39 / ExPEC).